The following is a 545-amino-acid chain: CTP synthase (545 aa).

An amidoligase domain region spans residues 1-266; it reads MTTNYIFVTG…DDYICKRFSL (266 aa). S14 is a binding site for CTP. S14 provides a ligand contact to UTP. ATP-binding positions include 15–20 and D72; that span reads SLGKGI. Mg(2+)-binding residues include D72 and E140. CTP contacts are provided by residues 147 to 149, 187 to 192, and K223; these read DIE and KTKPTQ. Residues 187–192 and K223 each bind UTP; that span reads KTKPTQ. 239-241 is a binding site for ATP; the sequence is KDV. The 252-residue stretch at 291-542 folds into the Glutamine amidotransferase type-1 domain; that stretch reads TIGMVGKYIE…VKAASEYQKR (252 aa). G352 provides a ligand contact to L-glutamine. The active-site Nucleophile; for glutamine hydrolysis is C379. Residues 380–383, E403, and R470 each bind L-glutamine; that span reads LGMQ. Residues H515 and E517 contribute to the active site.

This sequence belongs to the CTP synthase family. In terms of assembly, homotetramer.

The catalysed reaction is UTP + L-glutamine + ATP + H2O = CTP + L-glutamate + ADP + phosphate + 2 H(+). The enzyme catalyses L-glutamine + H2O = L-glutamate + NH4(+). It carries out the reaction UTP + NH4(+) + ATP = CTP + ADP + phosphate + 2 H(+). The protein operates within pyrimidine metabolism; CTP biosynthesis via de novo pathway; CTP from UDP: step 2/2. Its activity is regulated as follows. Allosterically activated by GTP, when glutamine is the substrate; GTP has no effect on the reaction when ammonia is the substrate. The allosteric effector GTP functions by stabilizing the protein conformation that binds the tetrahedral intermediate(s) formed during glutamine hydrolysis. Inhibited by the product CTP, via allosteric rather than competitive inhibition. Its function is as follows. Catalyzes the ATP-dependent amination of UTP to CTP with either L-glutamine or ammonia as the source of nitrogen. Regulates intracellular CTP levels through interactions with the four ribonucleotide triphosphates. The polypeptide is CTP synthase (Cronobacter sakazakii (strain ATCC BAA-894) (Enterobacter sakazakii)).